The sequence spans 550 residues: MAFNFNWSPLTADASFYKRARDLLTTALNKSPKPPIIVDDILVTEFNLGSVPPELEILEIGDLAEDRFRGIFKMTYSGDAFLTLKTRVQANPLNTYLYSKPSFTSPEPLAAASGLTIPLQITLSEIKLSAFIILVFSKQKGLTLVFRNDPLESLKVSSTFDSIQFVRDYLQRTIEGKLRNLMMDELPAIIHKLSLQLWCPEQMSKEDHEKTNEMDEQAVNPFASPPLDAVDAHGNLLDPIDISSIAVNGGAELQSLFSQKNLFRLGNLVNTQLTSSLFTPSVPEVIFRAKAGPVDKPEASSTTPLTTPSLVKSHSFHGTSTVYTFSDTSSQNNGQLPSRPSLVSLGSATTGLGLAASRNAKPYANRKKKTRVVNLRRKTDTAASSEMGDTMSDSASVQASESITMSDSIPEDPEEQPELTMSGSSRVRFGLGGERSALPQRPALRRDLFNPDEATASAEISQPQVARSTPEKETAAPVRTSENDKRSDSKRRGPRSETPSVILEQAWIMKMAGEIAKRVYDEKQRNPSFWDEREDSPPPAYEAQPTTAAS.

One can recognise an SMP-LTD domain in the interval 1–208; it reads MAFNFNWSPL…CPEQMSKEDH (208 aa). 3 disordered regions span residues 294-313, 358-505, and 519-550; these read VDKP…LVKS, RNAK…ILEQ, and VYDE…TAAS. The segment covering 300–310 has biased composition (low complexity); sequence SSTTPLTTPSL. Residues 364 to 376 show a composition bias toward basic residues; it reads ANRKKKTRVVNLR. Polar residues-rich tracts occupy residues 391–407 and 458–467; these read MSDS…TMSD and AEISQPQVAR. Residues 481 to 495 are compositionally biased toward basic and acidic residues; the sequence is SENDKRSDSKRRGPR.

Belongs to the MDM34 family. As to quaternary structure, component of the ER-mitochondria encounter structure (ERMES) or MDM complex, composed of MMM1, MDM10, MDM12 and MDM34.

Its subcellular location is the mitochondrion outer membrane. Its function is as follows. Component of the ERMES/MDM complex, which serves as a molecular tether to connect the endoplasmic reticulum (ER) and mitochondria. Components of this complex are involved in the control of mitochondrial shape and protein biogenesis, and function in nonvesicular lipid trafficking between the ER and mitochondria. MDM34 is required for the interaction of the ER-resident membrane protein MMM1 and the outer mitochondrial membrane-resident beta-barrel protein MDM10. In Pyricularia oryzae (strain 70-15 / ATCC MYA-4617 / FGSC 8958) (Rice blast fungus), this protein is Mitochondrial distribution and morphology protein 34.